We begin with the raw amino-acid sequence, 473 residues long: Benzoyl-CoA oxygenase component B (473 aa).

It belongs to the benzoyl-CoA oxygenase component B family. As to quaternary structure, monomer. The subunit composition of the active BoxA/BoxB protein complex is not known. Requires Fe cation as cofactor.

It carries out the reaction benzoyl-CoA + NADPH + O2 + H(+) = 2,3-epoxy-2,3-dihydrobenzoyl-CoA + NADP(+) + H2O. In terms of biological role, the BoxA/BoxB complex catalyzes the aerobic reduction/oxygenation of the aromatic ring of benzoyl-CoA to form 2,3-epoxy-2,3-dihydrobenzoyl-CoA. BoxB acts as the benzoyl-CoA oxygenase, after being reduced by the reductase component BoxA. BoxAB does not act on NADH or benzoate. The sequence is that of Benzoyl-CoA oxygenase component B (boxB) from Aromatoleum evansii (Azoarcus evansii).